Here is a 628-residue protein sequence, read N- to C-terminus: Glutamine--fructose-6-phosphate aminotransferase [isomerizing] (628 aa).

The active-site Nucleophile; for GATase activity is the Cys-2. The 228-residue stretch at 2-229 (CGIVGYVGHR…QDQAVVLTAD (228 aa)) folds into the Glutamine amidotransferase type-2 domain. The tract at residues 61 to 94 (ETDSNDGDGLGGSTGLGHTRWATHGRPTDRNAHP) is disordered. SIS domains follow at residues 301 to 440 (SDQE…ARGT) and 473 to 618 (LAER…VDKP). Catalysis depends on Lys-623, which acts as the For Fru-6P isomerization activity.

As to quaternary structure, homodimer.

It is found in the cytoplasm. The catalysed reaction is D-fructose 6-phosphate + L-glutamine = D-glucosamine 6-phosphate + L-glutamate. Its function is as follows. Catalyzes the first step in hexosamine metabolism, converting fructose-6P into glucosamine-6P using glutamine as a nitrogen source. This is Glutamine--fructose-6-phosphate aminotransferase [isomerizing] from Mycolicibacterium smegmatis (strain ATCC 700084 / mc(2)155) (Mycobacterium smegmatis).